The chain runs to 466 residues: Phosphomethylpyrimidine synthase (466 aa).

Substrate-binding positions include Asn80, Met109, Tyr139, His175, 195 to 197 (SRG), 236 to 239 (DSLR), and Glu275. A Zn(2+)-binding site is contributed by His279. Tyr302 contributes to the substrate binding site. His343 serves as a coordination point for Zn(2+). [4Fe-4S] cluster-binding residues include Cys423, Cys426, and Cys431.

This sequence belongs to the ThiC family. The cofactor is [4Fe-4S] cluster.

It carries out the reaction 5-amino-1-(5-phospho-beta-D-ribosyl)imidazole + S-adenosyl-L-methionine = 4-amino-2-methyl-5-(phosphooxymethyl)pyrimidine + CO + 5'-deoxyadenosine + formate + L-methionine + 3 H(+). It participates in cofactor biosynthesis; thiamine diphosphate biosynthesis. Catalyzes the synthesis of the hydroxymethylpyrimidine phosphate (HMP-P) moiety of thiamine from aminoimidazole ribotide (AIR) in a radical S-adenosyl-L-methionine (SAM)-dependent reaction. The sequence is that of Phosphomethylpyrimidine synthase from Synechococcus sp. (strain CC9902).